We begin with the raw amino-acid sequence, 146 residues long: MTDVQIPSPIVATRVAEADRLRFLPTYFGPSMLRMLRGEALVFGWMGRLCAAYHGGFWHFYTLSNGGFYMAPEHDGRLRIEVDGNGFAGELSADAAGIVATLFALNQLCAELAGTADADALIDRYHHLAAFASEHAEAAAIYRAID.

Belongs to the antirestriction protein family.

In terms of biological role, could be involved in overcoming restriction barriers during establishment after conjugative transfer. This is Antirestriction protein KlcA (klcA) from Escherichia coli.